The following is a 426-amino-acid chain: UPF0597 protein CLD_2825 (426 aa).

The protein belongs to the UPF0597 family.

The chain is UPF0597 protein CLD_2825 from Clostridium botulinum (strain Okra / Type B1).